Consider the following 327-residue polypeptide: Malate dehydrogenase (327 aa).

11–17 (GAAGQIS) contacts NAD(+). Residues Arg92 and Arg98 each coordinate substrate. NAD(+) is bound by residues Asn105, Gln112, and 129–131 (VGN). Asn131 and Arg162 together coordinate substrate. The Proton acceptor role is filled by His187.

The protein belongs to the LDH/MDH superfamily. MDH type 2 family.

It carries out the reaction (S)-malate + NAD(+) = oxaloacetate + NADH + H(+). Functionally, catalyzes the reversible oxidation of malate to oxaloacetate. This is Malate dehydrogenase from Saccharophagus degradans (strain 2-40 / ATCC 43961 / DSM 17024).